We begin with the raw amino-acid sequence, 222 residues long: Cytidylate kinase (222 aa).

Residue 9-17 (GPSGAGKST) participates in ATP binding.

The protein belongs to the cytidylate kinase family. Type 1 subfamily.

The protein resides in the cytoplasm. The catalysed reaction is CMP + ATP = CDP + ADP. It carries out the reaction dCMP + ATP = dCDP + ADP. The chain is Cytidylate kinase from Thermodesulfovibrio yellowstonii (strain ATCC 51303 / DSM 11347 / YP87).